A 207-amino-acid polypeptide reads, in one-letter code: Ion-translocating oxidoreductase complex subunit B (207 aa).

Residues 1 to 29 form a hydrophobic region; that stretch reads MLDLSIIAYLLIAICLIALIFGALLGYFS. One can recognise a 4Fe-4S domain in the interval 35–93; it reads EADPIVDQIDAILPQSQCGQCGYPGCKPYAEAIANGDQITKCVPGGQPLVVKIAELMGV. [4Fe-4S] cluster-binding residues include Cys52, Cys55, Cys60, Cys76, Cys116, Cys119, Cys122, Cys126, Cys146, Cys149, Cys152, and Cys156. 4Fe-4S ferredoxin-type domains are found at residues 107–136 and 137–166; these read KVAL…GTNK and AMHT…MIKV.

It belongs to the 4Fe4S bacterial-type ferredoxin family. RnfB subfamily. In terms of assembly, the complex is composed of six subunits: RnfA, RnfB, RnfC, RnfD, RnfE and RnfG. Requires [4Fe-4S] cluster as cofactor.

It is found in the cell inner membrane. Part of a membrane-bound complex that couples electron transfer with translocation of ions across the membrane. The polypeptide is Ion-translocating oxidoreductase complex subunit B (Haemophilus ducreyi (strain 35000HP / ATCC 700724)).